Consider the following 525-residue polypeptide: Transcriptional regulatory protein TOD6 (525 aa).

The segment at 22 to 82 is disordered; that stretch reads GFSILSKHPH…NNPSSWDPSD (61 aa). The span at 35–47 shows a compositional bias: polar residues; the sequence is LVHSHSLSHTNAK. Residues 61 to 71 are compositionally biased toward basic and acidic residues; it reads STNKEEAESLK. The HTH myb-type domain occupies 67–124; sequence AESLKKNNPSSWDPSDDIKLRHLKEIKNLGWKEIAHHFPNRTPNACQFRWRRLKSGNL. The H-T-H motif DNA-binding region spans 97–120; sequence WKEIAHHFPNRTPNACQFRWRRLK. Phosphoserine is present on S280. The disordered stretch occupies residues 283 to 308; that stretch reads PSTQIPHSTTKTRKNSHSVISSRRSS. A compositionally biased stretch (low complexity) spans 299–308; it reads HSVISSRRSS. Phosphoserine occurs at positions 333, 341, and 366. The segment at 451–510 is disordered; the sequence is TNEGCKDEEEEDDIDPLHKENGINTPSQQSQNYGMLEAKHDNPKSSELSSMTSANDIRNE. Polar residues-rich tracts occupy residues 472 to 483 and 495 to 506; these read GINTPSQQSQNY and SSELSSMTSAND.

It belongs to the DOT6 family. In terms of assembly, component of the RPD3C(L) complex composed of at least ASH1, CTI6, DEP1, DOT6, PHO23, RPD3, RXT2, RXT3, SAP30, SDS3, SIN3, TOD6; UME1 and UME6.

It is found in the cytoplasm. Its subcellular location is the nucleus. In terms of biological role, component of the RPD3 histone deacetylase complex RPD3C(L) responsible for the deacetylation of lysine residues on the N-terminal part of the core histones (H2A, H2B, H3 and H4). Histone deacetylation gives a tag for epigenetic repression and plays an important role in transcriptional regulation, cell cycle progression and developmental events. TOD6 binds to sequences containing the core CGATG, which resembles the PAC (Polymerase A and C) motif. The polypeptide is Transcriptional regulatory protein TOD6 (TOD6) (Saccharomyces cerevisiae (strain ATCC 204508 / S288c) (Baker's yeast)).